We begin with the raw amino-acid sequence, 371 residues long: Glutamate 5-kinase (371 aa).

Residue Lys11 coordinates ATP. Ser52, Asp139, and Asn151 together coordinate substrate. ATP contacts are provided by residues 171-172 (TD) and 213-219 (TGGMATK). In terms of domain architecture, PUA spans 278–356 (EGSLTLDEGA…AEIPRILGYE (79 aa)).

This sequence belongs to the glutamate 5-kinase family.

Its subcellular location is the cytoplasm. The enzyme catalyses L-glutamate + ATP = L-glutamyl 5-phosphate + ADP. The protein operates within amino-acid biosynthesis; L-proline biosynthesis; L-glutamate 5-semialdehyde from L-glutamate: step 1/2. Catalyzes the transfer of a phosphate group to glutamate to form L-glutamate 5-phosphate. The sequence is that of Glutamate 5-kinase from Synechococcus sp. (strain JA-2-3B'a(2-13)) (Cyanobacteria bacterium Yellowstone B-Prime).